We begin with the raw amino-acid sequence, 62 residues long: Large ribosomal subunit protein bL28 (62 aa).

A disordered region spans residues 1–27; that stretch reads MAKECVITGRKSRSGNKRSHAMNSSKR. Positions 10–20 are enriched in basic residues; the sequence is RKSRSGNKRSH.

Belongs to the bacterial ribosomal protein bL28 family.

This Listeria innocua serovar 6a (strain ATCC BAA-680 / CLIP 11262) protein is Large ribosomal subunit protein bL28.